The primary structure comprises 140 residues: ATP synthase epsilon chain (140 aa).

The protein belongs to the ATPase epsilon chain family. In terms of assembly, F-type ATPases have 2 components, CF(1) - the catalytic core - and CF(0) - the membrane proton channel. CF(1) has five subunits: alpha(3), beta(3), gamma(1), delta(1), epsilon(1). CF(0) has three main subunits: a, b and c.

It localises to the cell inner membrane. Produces ATP from ADP in the presence of a proton gradient across the membrane. The protein is ATP synthase epsilon chain of Nitrosomonas eutropha (strain DSM 101675 / C91 / Nm57).